The primary structure comprises 469 residues: Biotin synthase (469 aa).

Residues 51-278 (MTVKVNYLVN…DKEIRMAGGR (228 aa)) enclose the Radical SAM core domain. The [4Fe-4S] cluster site is built by cysteine 66, cysteine 70, and cysteine 73. Cysteine 110, cysteine 143, cysteine 203, and arginine 273 together coordinate [2Fe-2S] cluster. Residues 326-469 (AGPDPSRDRH…GAGTSVAPNA (144 aa)) form a disordered region. Low complexity-rich tracts occupy residues 363-384 (GSAAGSSSGDGSAPDGGRAPAD) and 405-428 (AGGPARTRSAAASSAPTGAGMSPA).

Belongs to the radical SAM superfamily. Biotin synthase family. As to quaternary structure, homodimer. The cofactor is [4Fe-4S] cluster. It depends on [2Fe-2S] cluster as a cofactor.

The catalysed reaction is (4R,5S)-dethiobiotin + (sulfur carrier)-SH + 2 reduced [2Fe-2S]-[ferredoxin] + 2 S-adenosyl-L-methionine = (sulfur carrier)-H + biotin + 2 5'-deoxyadenosine + 2 L-methionine + 2 oxidized [2Fe-2S]-[ferredoxin]. It participates in cofactor biosynthesis; biotin biosynthesis; biotin from 7,8-diaminononanoate: step 2/2. Catalyzes the conversion of dethiobiotin (DTB) to biotin by the insertion of a sulfur atom into dethiobiotin via a radical-based mechanism. The polypeptide is Biotin synthase (Kocuria rhizophila (strain ATCC 9341 / DSM 348 / NBRC 103217 / DC2201)).